Here is a 392-residue protein sequence, read N- to C-terminus: Alanine--glyoxylate aminotransferase (392 aa).

Thr9 bears the Phosphothreonine mark. Lys209 bears the N6-(pyridoxal phosphate)lysine mark. Lys225 carries the N6-acetyllysine; alternate modification. An N6-succinyllysine; alternate modification is found at Lys225. 2 positions are modified to N6-acetyllysine: Lys234 and Lys312. Residue Arg360 coordinates substrate.

The protein belongs to the class-V pyridoxal-phosphate-dependent aminotransferase family. In terms of assembly, homodimer. Requires pyridoxal 5'-phosphate as cofactor. As to expression, liver.

Its subcellular location is the peroxisome. The catalysed reaction is L-serine + pyruvate = 3-hydroxypyruvate + L-alanine. It carries out the reaction glyoxylate + L-alanine = glycine + pyruvate. Its activity is regulated as follows. Alanine--glyoxylate aminotransferase activity is inhibited by 1 mM (aminooxy)acetic acid by 97.5%. Functionally, peroxisomal aminotransferase that catalyzes the transamination of glyoxylate to glycine and contributes to the glyoxylate detoxification. Also catalyzes the transamination between L-serine and pyruvate and contributes to gluconeogenesis from the L-serine metabolism. This Homo sapiens (Human) protein is Alanine--glyoxylate aminotransferase.